Consider the following 75-residue polypeptide: Lysis protein (75 aa).

The segment covering 1–16 has biased composition (polar residues); sequence METRFPQQSQQTPAST. The segment at 1 to 29 is disordered; the sequence is METRFPQQSQQTPASTNRRRPFKHEDYPC. The chain crosses the membrane as a helical span at residues 38 to 60; sequence LYVLIFLAIFLSKFTNQLLLSLL.

Belongs to the Leviviricetes lysis protein family.

The protein resides in the host cell inner membrane. It is found in the host cell outer membrane. Functionally, induces the formation of specific membrane adhesion sites between the inner and outer membranes, apparently leading to host cell lysis. Lysis may be performed via activation of host murein hydrolases. This is Lysis protein from Escherichia phage MS2 (Bacteriophage MS2).